Here is a 219-residue protein sequence, read N- to C-terminus: Transmembrane protein 247 (219 aa).

2 stretches are compositionally biased toward basic and acidic residues: residues 1–10 and 29–45; these read MAAEDREMME and SKSEGKPRAYLEAESQK. A disordered region spans residues 1 to 101; sequence MAAEDREMME…LPPTPGTERN (101 aa). The stretch at 121-156 forms a coiled coil; it reads LHEKNQRQRQHEVVMEQLQRERQHEVVMEQLQQEAA. The next 2 membrane-spanning stretches (helical) occupy residues 167–187 and 194–214; these read FLLPQNQFAMFLYCFIFIHII and VFFLFAKHYLFCIAAILLCLI.

It is found in the membrane. This chain is Transmembrane protein 247 (TMEM247), found in Homo sapiens (Human).